The chain runs to 95 residues: Defensin-like protein 232 (95 aa).

An N-terminal signal peptide occupies residues 1–26; it reads MRCTTLIMVSFVVSCLLLSLVEESEA. Cystine bridges form between cysteine 33-cysteine 94, cysteine 43-cysteine 68, cysteine 51-cysteine 84, and cysteine 66-cysteine 86.

This sequence belongs to the DEFL family. In terms of tissue distribution, flower buds.

The protein localises to the secreted. This chain is Defensin-like protein 232 (SCRL23), found in Arabidopsis thaliana (Mouse-ear cress).